A 316-amino-acid polypeptide reads, in one-letter code: MKIANNTVVTEFILLGLTQSQDIQLLVFVLILIFYLIILPGNFLIIFTIRSDPGLTAPLYLFLGNLAFLDASYSFIVAPRMLVDFLSEKKVISYRGCITQLFFLHFLGGGEGLLLVVMAFDRYIAICRPLHCSTVMNPRACYAMMLALWLGGFVHSIIQVVLILRLPFCGPNQLDNFFCDVRQVIKLACTDMFVVELLMVFNSGLMTLLCFLGLLASYAVILCHVRRAASEGKNKAMSTCTTRVIIILLMFGPAIFIYMCPFRALPADKMVSLFHTVIFPLMNPMIYTLRNQEVKTSMKRLLSRHVVCQVDFIIRN.

The Extracellular portion of the chain corresponds to 1 to 25; that stretch reads MKIANNTVVTEFILLGLTQSQDIQL. Asn5 carries an N-linked (GlcNAc...) asparagine glycan. Residues 26 to 49 traverse the membrane as a helical segment; sequence LVFVLILIFYLIILPGNFLIIFTI. Residues 50–57 are Cytoplasmic-facing; that stretch reads RSDPGLTA. A helical transmembrane segment spans residues 58–79; sequence PLYLFLGNLAFLDASYSFIVAP. Topologically, residues 80 to 100 are extracellular; that stretch reads RMLVDFLSEKKVISYRGCITQ. Cys97 and Cys189 form a disulfide bridge. Residues 101-120 form a helical membrane-spanning segment; the sequence is LFFLHFLGGGEGLLLVVMAF. The Cytoplasmic segment spans residues 121–139; it reads DRYIAICRPLHCSTVMNPR. A helical membrane pass occupies residues 140 to 158; sequence ACYAMMLALWLGGFVHSII. Residues 159–195 are Extracellular-facing; that stretch reads QVVLILRLPFCGPNQLDNFFCDVRQVIKLACTDMFVV. Residues 196-219 form a helical membrane-spanning segment; the sequence is ELLMVFNSGLMTLLCFLGLLASYA. Residues 220 to 235 are Cytoplasmic-facing; sequence VILCHVRRAASEGKNK. A helical transmembrane segment spans residues 236–258; it reads AMSTCTTRVIIILLMFGPAIFIY. Topologically, residues 259-269 are extracellular; sequence MCPFRALPADK. Residues 270–289 traverse the membrane as a helical segment; the sequence is MVSLFHTVIFPLMNPMIYTL. At 290-316 the chain is on the cytoplasmic side; that stretch reads RNQEVKTSMKRLLSRHVVCQVDFIIRN.

Belongs to the G-protein coupled receptor 1 family.

It localises to the cell membrane. Functionally, odorant receptor. The chain is Olfactory receptor 4N4 (OR4N4) from Homo sapiens (Human).